Here is a 471-residue protein sequence, read N- to C-terminus: 5-hydroxytryptamine receptor 2A (471 aa).

Over 1-80 (MEILCEDNIS…LQEKNWSALL (80 aa)) the chain is Extracellular. Asparagine 8, asparagine 38, asparagine 44, asparagine 51, and asparagine 54 each carry an N-linked (GlcNAc...) asparagine glycan. Residues 81-97 (TTVVIILTIAGNILVIM) traverse the membrane as a helical segment. Topologically, residues 98-111 (AVSLEKKLQNATNY) are cytoplasmic. The helical transmembrane segment at 112 to 137 (FLMSLAIADMLLGFLVMPVSMLTILY) threads the bilayer. Residues 138–146 (GYRWPLPSK) are Extracellular-facing. The chain crosses the membrane as a helical span at residues 147 to 171 (LCAVWIYLDVLFSTASIMHLCAISL). A disulfide bond links cysteine 148 and cysteine 227. Residue aspartate 155 coordinates serotonin. The short motif at 172-174 (DRY) is the DRY motif; important for ligand-induced conformation changes element. Residues 172–191 (DRYVAIQNPIHHSRFNSRTK) lie on the Cytoplasmic side of the membrane. A helical membrane pass occupies residues 192-215 (AFLKIIAVWTISVGISMPIPVFGL). Topologically, residues 216-232 (QDDSKVFKEGSCLLADD) are extracellular. A helical membrane pass occupies residues 233–258 (NFVLIGSFVAFFIPLTIMVITYFLTI). At 259–322 (KSLQKEATLC…QSISNEQKAC (64 aa)) the chain is on the cytoplasmic side. Serine 280 is modified (phosphoserine). The chain crosses the membrane as a helical span at residues 323–348 (KVLGIVFFLFVVMWCPFFITNIMAVI). Residue asparagine 343 coordinates serotonin. A disulfide bridge links cysteine 349 with cysteine 353. At 349–356 (CKESCNEN) the chain is on the extracellular side. The chain crosses the membrane as a helical span at residues 357–382 (VIGALLNVFVWIGYLSSAVNPLVYTL). Residues 376–380 (NPLVY) carry the NPxxY motif; important for ligand-induced conformation changes and signaling motif. Residues 383–471 (FNKTYRSAFS…ETVNEKVSCV (89 aa)) lie on the Cytoplasmic side of the membrane. A PDZ-binding motif is present at residues 469-471 (SCV).

Belongs to the G-protein coupled receptor 1 family. Interacts (via C-terminus) with MPDZ and PATJ. May interact (via C-terminus) with MPP3, PRDX6, DLG4, DLG1, CASK, APBA1 and MAGI2. Interacts with GRM2 and DRD2; this may affect signaling. Detected in neurons in brain cortex. Detected in adult intestine, especially in mucosal epithelium, longitudinal and circular layers of muscularis externa and myenteric plexuses. Highly expressed in Paneth cells, and detected at lower levels in enterocytes (at protein level). Detected in neurons in the brain cortex.

The protein resides in the cell membrane. The protein localises to the cell projection. It localises to the dendrite. It is found in the axon. Its subcellular location is the cytoplasmic vesicle. The protein resides in the membrane. The protein localises to the caveola. It localises to the presynapse. With respect to regulation, G-protein coupled receptor activity is regulated by lipids: oleamide increases HTR2A-mediated activity. G-protein coupled receptor for 5-hydroxytryptamine (serotonin). Also functions as a receptor for various drugs and psychoactive substances, including mescaline, psilocybin, 1-(2,5-dimethoxy-4-iodophenyl)-2-aminopropane (DOI) and lysergic acid diethylamide (LSD). Ligand binding causes a conformation change that triggers signaling via guanine nucleotide-binding proteins (G proteins) and modulates the activity of downstream effectors. HTR2A is coupled to G(q)/G(11) G alpha proteins and activates phospholipase C-beta, releasing diacylglycerol (DAG) and inositol 1,4,5-trisphosphate (IP3) second messengers that modulate the activity of phosphatidylinositol 3-kinase and promote the release of Ca(2+) ions from intracellular stores, respectively. Beta-arrestin family members inhibit signaling via G proteins and mediate activation of alternative signaling pathways. Affects neural activity, perception, cognition and mood. Plays a role in the regulation of behavior, including responses to anxiogenic situations and psychoactive substances. Plays a role in intestinal smooth muscle contraction, and may play a role in arterial vasoconstriction. The polypeptide is 5-hydroxytryptamine receptor 2A (Htr2a) (Mus musculus (Mouse)).